The chain runs to 426 residues: MNRNEILFDRAKAIIPGGVNSPVRAFGSVGGVPRFIKKAEGAYVWDENGTRYTDYVGSWGPAIVGHAHPEVVEAVREAALGGLSFGAPTEGEIAIAEQIAEIMPSVERLRLVSSGTEATMTAIRLARGFTGRDKIIKFEGCYHGHSDSLLVKAGSGLLTFGNPSSAGVPADFTKHTLVLEYNNIAQLEEAFAQSGDEIACVIVEPFVGNMNLVRPTEAFVKALRGLTEKHGAVLIYDEVMTGFRVALGGAQSLHGITPDLTTMGKVIGGGMPLAAFGGRKDIMECISPLAGVYQAGTLSGNPIAVAAGLKTLEIIQREGFYENLTALTQRLANGIAAAKAHGIEFAADSVGGMFGLYFAAHVPRNYADMARSNIDAFKRFFHGMLDRGIAFGPSAYEAGFVSAAHTPELIDETVAVAVEVFKAMAA.

Lysine 265 bears the N6-(pyridoxal phosphate)lysine mark.

The protein belongs to the class-III pyridoxal-phosphate-dependent aminotransferase family. HemL subfamily. As to quaternary structure, homodimer. The cofactor is pyridoxal 5'-phosphate.

It localises to the cytoplasm. It carries out the reaction (S)-4-amino-5-oxopentanoate = 5-aminolevulinate. Its pathway is porphyrin-containing compound metabolism; protoporphyrin-IX biosynthesis; 5-aminolevulinate from L-glutamyl-tRNA(Glu): step 2/2. The polypeptide is Glutamate-1-semialdehyde 2,1-aminomutase (Neisseria gonorrhoeae (strain NCCP11945)).